The following is an 896-amino-acid chain: Alanine--tRNA ligase (896 aa).

His-574, His-578, Cys-677, and His-681 together coordinate Zn(2+).

It belongs to the class-II aminoacyl-tRNA synthetase family. Zn(2+) serves as cofactor.

The protein resides in the cytoplasm. It catalyses the reaction tRNA(Ala) + L-alanine + ATP = L-alanyl-tRNA(Ala) + AMP + diphosphate. Its function is as follows. Catalyzes the attachment of alanine to tRNA(Ala) in a two-step reaction: alanine is first activated by ATP to form Ala-AMP and then transferred to the acceptor end of tRNA(Ala). Also edits incorrectly charged Ser-tRNA(Ala) and Gly-tRNA(Ala) via its editing domain. The polypeptide is Alanine--tRNA ligase (Mycoplasma mycoides subsp. mycoides SC (strain CCUG 32753 / NCTC 10114 / PG1)).